The following is a 122-amino-acid chain: MSRIITAPHIGIEKLSAISLEELSCGLPDRYALPPDGHPVEPHLERLYPTAQSKRSLWDFASPGYTFHGLHRAQDYRRELDTLQSLLTTSQSSELQAAAALLKCQQDDDRLLQIILNLLHKV.

The stretch at 71–87 (HRAQDYRRELDTLQSLL) forms a coiled coil.

As to quaternary structure, interacts with YscY.

Its subcellular location is the secreted. Required for Yop secretion. The protein is Yop proteins translocation protein X (yscX) of Yersinia enterocolitica.